The chain runs to 463 residues: Peptidylprolyl isomerase cyp7 (463 aa).

The 156-residue stretch at 11 to 166 (ATGTVILKTT…FPPKIISTEV (156 aa)) folds into the PPIase cyclophilin-type domain. The segment at 224 to 275 (VKKPLRQKTPVSRSSDTTTELSKDLISSSSSIHSTYSSAQTGLTSAKVSSDE) is disordered. Over residues 232–243 (TPVSRSSDTTTE) the composition is skewed to polar residues. Over residues 250–261 (SSSSSIHSTYSS) the composition is skewed to low complexity. Residues 262 to 271 (AQTGLTSAKV) show a composition bias toward polar residues.

The protein belongs to the cyclophilin-type PPIase family. CWC27 subfamily. Belongs to the 40S cdc5-associated complex (or cwf complex), a spliceosome sub-complex reminiscent of a late-stage spliceosome composed of the U2, U5 and U6 snRNAs and at least brr2, cdc5, cwf2/prp3, cwf3/syf1, cwf4/syf3, cwf5/ecm2, spp42/cwf6, cwf7/spf27, cwf8, cwf9, cwf10, cwf11, cwf12, prp45/cwf13, cwf14, cwf15, cwf16, cwf17, cwf18, cwf19, cwf20, cwf21, cwf22, cwf23, cwf24, cwf25, cwf26, cyp7/cwf27, cwf28, cwf29/ist3, lea1, msl1, prp5/cwf1, prp10, prp12/sap130, prp17, prp22, sap61, sap62, sap114, sap145, slu7, smb1, smd1, smd3, smf1, smg1 and syf2.

The protein localises to the cytoplasm. The protein resides in the nucleus. The enzyme catalyses [protein]-peptidylproline (omega=180) = [protein]-peptidylproline (omega=0). In terms of biological role, PPIases accelerate the folding of proteins. Catalyzes the cis-trans isomerization of proline imidic peptide bonds in oligopeptides. Involved in pre-mRNA splicing. In Schizosaccharomyces pombe (strain 972 / ATCC 24843) (Fission yeast), this protein is Peptidylprolyl isomerase cyp7 (cyp7).